Here is a 159-residue protein sequence, read N- to C-terminus: Putative transcriptional regulatory protein rrnAC0199 (159 aa).

This sequence belongs to the Tfx family.

Functionally, putative transcriptional regulator. This Haloarcula marismortui (strain ATCC 43049 / DSM 3752 / JCM 8966 / VKM B-1809) (Halobacterium marismortui) protein is Putative transcriptional regulatory protein rrnAC0199.